The following is a 710-amino-acid chain: Solute carrier organic anion transporter family member 3A1 (710 aa).

Met1 is subject to N-acetylmethionine. Gly residues predominate over residues 1–15 (MQGKKPGGSSGGGRS). Residues 1–25 (MQGKKPGGSSGGGRSGELQGDEAQR) are disordered. Residues 1-40 (MQGKKPGGSSGGGRSGELQGDEAQRNKKKKKKVSCFSNIK) are Cytoplasmic-facing. A helical transmembrane segment spans residues 41–60 (IFLVSECALMLAQGTVGAYL). Topologically, residues 61–79 (VSVLTTLERRFNLQSADVG) are extracellular. Residues 80–100 (VIASSFEIGNLALILFVSYFG) traverse the membrane as a helical segment. Residues 101–106 (ARGHRP) are Cytoplasmic-facing. Residues 107–131 (RLIGCGGIVMALGALLSALPEFLTH) form a helical membrane-spanning segment. Topologically, residues 132–174 (QYKYEAGEIRWGAEGRDVCAANGSGGDEGPDPDLICRNRTATN) are extracellular. N-linked (GlcNAc...) asparagine glycans are attached at residues Asn153 and Asn169. Residues 175–203 (MMYLLLIGAQVLLGIGATPVQPLGVSYID) traverse the membrane as a helical segment. Topologically, residues 204–222 (DHVRRKDSSLYIGILFTML) are cytoplasmic. Residues 223–243 (VFGPACGFILGSFCTKIYVDA) form a helical membrane-spanning segment. The Extracellular portion of the chain corresponds to 244–261 (VFIDTSNLDITPDDPRWI). The helical transmembrane segment at 262–286 (GAWWGGFLLCGALLFFSSLLMFGFP) threads the bilayer. The Cytoplasmic segment spans residues 287 to 344 (QSLPPHSEPAMESEQAMLSEREYERPKPSNGVLRHPLEPDSSASCFQQLRVIPKVTKH). A helical transmembrane segment spans residues 345-366 (LLSNPVFTCIILAACMEIAVVA). The Extracellular segment spans residues 367 to 386 (GFAAFLGKYLEQQFNLTTSS). The N-linked (GlcNAc...) asparagine glycan is linked to Asn381. A helical transmembrane segment spans residues 387–410 (ANQLLGMTAIPCACLGIFLGGLLV). At 411–414 (KKLS) the chain is on the cytoplasmic side. Residues 415–438 (LSALGAIRMAMLVNLVSTACYVSF) form a helical membrane-spanning segment. The Extracellular portion of the chain corresponds to 439–539 (LFLGCDTGPV…PGCQEAFLTF (101 aa)). The N-linked (GlcNAc...) asparagine glycan is linked to Asn457. The 49-residue stretch at 465–513 (LDPYSPCNNNCECQTDSFTPVCGADGITYLSACFAGCNSTNLTGCACLT) folds into the Kazal-like domain. Cystine bridges form between Cys471–Cys501, Cys477–Cys497, and Cys486–Cys511. N-linked (GlcNAc...) asparagine glycans are attached at residues Asn502, Asn505, and Asn519. Residues 540 to 562 (LCVMCICSLIGAMAQTPSVIILI) form a helical membrane-spanning segment. The Cytoplasmic portion of the chain corresponds to 563–571 (RTVSPELKS). The chain crosses the membrane as a helical span at residues 572–597 (YALGVLFLLLRLLGFIPPPLIFGAGI). Topologically, residues 598 to 630 (DSTCLFWSTFCGEQGACVLYDNVVYRYLYVSIA) are extracellular. The helical transmembrane segment at 631–648 (IALKSFAFILYTTTWQCL) threads the bilayer. Over 649–705 (RKNYKRYIKNHEGGLSTSEFFASTLTLDNLGRDPVPANQTHRTKFIYNLEDHEWCEN) the chain is Cytoplasmic.

This sequence belongs to the organo anion transporter (TC 2.A.60) family. In terms of tissue distribution, generally the expression of isoform 1 is higher than that of isoform 2. As to expression, expressed in placental trophoblasts. Expressed in pancreas, kidney, liver, lung, brain, heart, cerebellum, peripheral blood leukocyte, colon, small intestine, ovary, testis, prostate, thyroid, thymus and spleen. Expressed in fetal brain, heart, kidney, liver, lung, skeletal muscle, spleen and pancreas. In testis, detected in spermatogonia at different stages and absent from Sertoli cells. Expressed in the choroid plexus epithelium, at the basolateral membrane. In brain, also very abundant in the gray matter of the frontal cortex, but not associated with neuronal cell bodies. Not detected in the white matter. Expressed in heart, brain, cerebellum, testis, lung, thyroid, spoleen and liver. In testis, primarily localized to the basal membrane of Sertoli cells and weakly expressed within the tubules. In testis, also present in spermatogonia at different stages. In brain, expressed in the choroid plexus epithelium, at the apical membrane as well as in the subapical intracellular vesicular compartments. In brain, also associated with neuronal bodies and axons in both the gray and the white matters of the frontal cortex.

The protein localises to the basolateral cell membrane. Its subcellular location is the apical cell membrane. It localises to the basal cell membrane. It carries out the reaction L-thyroxine(out) = L-thyroxine(in). It catalyses the reaction prostaglandin E1(out) = prostaglandin E1(in). The catalysed reaction is prostaglandin E2(out) = prostaglandin E2(in). The enzyme catalyses prostaglandin F2alpha(out) = prostaglandin F2alpha(in). It carries out the reaction (5Z,8Z,11Z,14Z)-eicosatetraenoate(out) = (5Z,8Z,11Z,14Z)-eicosatetraenoate(in). It catalyses the reaction taurocholate(out) = taurocholate(in). The catalysed reaction is glycocholate(out) = glycocholate(in). The enzyme catalyses estrone 3-sulfate(out) = estrone 3-sulfate(in). It carries out the reaction argipressin(out) = argipressin(in). Stimulated by extracellular acidic pH. Functionally, putative organic anion antiporter with apparent broad substrate specificity. Recognizes various substrates including thyroid hormone L-thyroxine, prostanoids such as prostaglandin E1 and E2, bile acids such as taurocholate, glycolate and glycochenodeoxycholate and peptide hormones such as L-arginine vasopressin, likely operating in a tissue-specific manner. The transport mechanism, its electrogenicity and potential tissue-specific counterions remain to be elucidated. In Homo sapiens (Human), this protein is Solute carrier organic anion transporter family member 3A1 (SLCO3A1).